We begin with the raw amino-acid sequence, 1098 residues long: Bifunctional helicase and thymine dioxygenase JBP2 (1098 aa).

Residues 1–540 (MLNGLTRVST…PPLFVPTRLA (540 aa)) are thymine dioxygenase. Residues His-415, Asp-417, and His-465 each contribute to the Fe cation site. Arg-479 provides a ligand contact to 2-oxoglutarate. The interval 541–1098 (SHLAPVQLAA…RYQESVRESE (558 aa)) is DNA Helicase. The region spanning 555 to 730 (VERTEKQSGC…YRLVGWVNKG (176 aa)) is the Helicase ATP-binding domain. 568–575 (MTMGLGKT) contacts ATP. The short motif at 681-684 (DEGH) is the DEAH box element. Residues 897–1057 (VLVDIVLRVQ…ALPDELEDCA (161 aa)) form the Helicase C-terminal domain.

The protein in the C-terminal section; belongs to the SNF2/RAD54 helicase family. In the N-terminal section; belongs to the TET family. JBP2 subfamily. Requires Fe(2+) as cofactor.

It localises to the nucleus. It catalyses the reaction ATP + H2O = ADP + phosphate + H(+). It carries out the reaction thymine + 2-oxoglutarate + O2 = 5-hydroxymethyluracil + succinate + CO2. Functionally, dioxygenase that catalyzes the first step of DNA base J (beta-d-glucosyl-HOMedU) biosynthesis by converting thymine to 5-hydroxymethyluracil (HOMedU). DNA base J is a hypermodified thymidine residue found in the genome of kinetoplastid parasites, which is localized primarily to repetitive DNA, namely the telomeres, and is implicated in the regulation of antigenic variation. Probably also acts as a DNA helicase. Recognizes and binds specific regions of the genome, hydrolyzes ATP and allows the DNA base J de novo synthesis. Involved in initial synthesis of DNA base J, JBP1 being able to act via the basal level of DNA base J and propagate further synthesis. In contrast to JBP1, it does not specifically bind DNA base J, however it binds chromatin. In Leishmania infantum, this protein is Bifunctional helicase and thymine dioxygenase JBP2 (JBP2).